The following is a 77-amino-acid chain: Acyl carrier protein (77 aa).

Positions 1–76 constitute a Carrier domain; that stretch reads MDREQRIKEI…DVINYLNEKL (76 aa). An O-(pantetheine 4'-phosphoryl)serine modification is found at serine 36.

The protein belongs to the acyl carrier protein (ACP) family. In terms of processing, 4'-phosphopantetheine is transferred from CoA to a specific serine of apo-ACP by AcpS. This modification is essential for activity because fatty acids are bound in thioester linkage to the sulfhydryl of the prosthetic group.

It localises to the cytoplasm. It functions in the pathway lipid metabolism; fatty acid biosynthesis. Functionally, carrier of the growing fatty acid chain in fatty acid biosynthesis. This is Acyl carrier protein from Hydrogenobaculum sp. (strain Y04AAS1).